Reading from the N-terminus, the 356-residue chain is sn-glycerol-3-phosphate import ATP-binding protein UgpC (356 aa).

The region spanning leucine 4 to isoleucine 235 is the ABC transporter domain. Glycine 37 to serine 44 is an ATP binding site.

It belongs to the ABC transporter superfamily. sn-glycerol-3-phosphate importer (TC 3.A.1.1.3) family. In terms of assembly, the complex is composed of two ATP-binding proteins (UgpC), two transmembrane proteins (UgpA and UgpE) and a solute-binding protein (UgpB).

It is found in the cell inner membrane. It catalyses the reaction sn-glycerol 3-phosphate(out) + ATP + H2O = sn-glycerol 3-phosphate(in) + ADP + phosphate + H(+). Part of the ABC transporter complex UgpBAEC involved in sn-glycerol-3-phosphate (G3P) import. Responsible for energy coupling to the transport system. The polypeptide is sn-glycerol-3-phosphate import ATP-binding protein UgpC (Escherichia coli O6:K15:H31 (strain 536 / UPEC)).